Here is a 208-residue protein sequence, read N- to C-terminus: Uracil phosphoribosyltransferase (208 aa).

5-phospho-alpha-D-ribose 1-diphosphate is bound by residues R78, R103, and 130-138; that span reads DPMLATANS. Residues I193 and 198 to 200 each bind uracil; that span reads GDA. D199 provides a ligand contact to 5-phospho-alpha-D-ribose 1-diphosphate.

This sequence belongs to the UPRTase family. The cofactor is Mg(2+).

It catalyses the reaction UMP + diphosphate = 5-phospho-alpha-D-ribose 1-diphosphate + uracil. It participates in pyrimidine metabolism; UMP biosynthesis via salvage pathway; UMP from uracil: step 1/1. Allosterically activated by GTP. In terms of biological role, catalyzes the conversion of uracil and 5-phospho-alpha-D-ribose 1-diphosphate (PRPP) to UMP and diphosphate. The sequence is that of Uracil phosphoribosyltransferase from Brucella canis (strain ATCC 23365 / NCTC 10854 / RM-666).